The following is a 181-amino-acid chain: Mating-type M-specific polypeptide Mc (181 aa).

The HMG box DNA-binding region spans Thr103 to Lys171.

The protein resides in the nucleus. The protein localises to the cytoplasm. Its subcellular location is the cytoskeleton. It is found in the microtubule organizing center. It localises to the spindle pole body. In terms of biological role, mating type proteins are sequence specific DNA-binding proteins that act as master switches in yeast differentiation by controlling gene expression in a cell type-specific fashion. Positive regulator of MFM genes. The HMG box recognizes the DNA sequence 5'-AACAAAG-3'. Required for conjugation and efficient meiosis. This Schizosaccharomyces pombe (Fission yeast) protein is Mating-type M-specific polypeptide Mc (mat3-Mc).